Consider the following 178-residue polypeptide: ATP-dependent protease subunit HslV (178 aa).

Residue threonine 7 is part of the active site. 3 residues coordinate Na(+): glycine 162, cysteine 165, and threonine 168.

This sequence belongs to the peptidase T1B family. HslV subfamily. In terms of assembly, a double ring-shaped homohexamer of HslV is capped on each side by a ring-shaped HslU homohexamer. The assembly of the HslU/HslV complex is dependent on binding of ATP.

It is found in the cytoplasm. It catalyses the reaction ATP-dependent cleavage of peptide bonds with broad specificity.. With respect to regulation, allosterically activated by HslU binding. Functionally, protease subunit of a proteasome-like degradation complex believed to be a general protein degrading machinery. This Cupriavidus necator (strain ATCC 17699 / DSM 428 / KCTC 22496 / NCIMB 10442 / H16 / Stanier 337) (Ralstonia eutropha) protein is ATP-dependent protease subunit HslV.